The following is a 486-amino-acid chain: Putative ankyrin repeat protein R634 (486 aa).

12 ANK repeats span residues 84 to 113 (DLFK…NVRE), 114 to 143 (HNDV…DLYA), 145 to 173 (KNTL…NFRE), 174 to 203 (NCDT…DVNS), 205 to 233 (SHKS…NIDW), 234 to 263 (RHNY…NLEI), 265 to 293 (DGCI…EIGF), 307 to 336 (NKIT…ATIK), 337 to 366 (EKNY…SLEK), 367 to 396 (KINK…NVKT), 398 to 426 (EGLP…DVTS), and 427 to 456 (YDNY…NVND).

The protein is Putative ankyrin repeat protein R634 of Acanthamoeba polyphaga (Amoeba).